Here is a 233-residue protein sequence, read N- to C-terminus: Ribose-5-phosphate isomerase A (233 aa).

Residues 28–31 (TGST), 85–88 (DGAD), and 98–101 (KGLG) contribute to the substrate site. The Proton acceptor role is filled by glutamate 107. Lysine 125 serves as a coordination point for substrate.

The protein belongs to the ribose 5-phosphate isomerase family. In terms of assembly, homodimer.

The enzyme catalyses aldehydo-D-ribose 5-phosphate = D-ribulose 5-phosphate. Its pathway is carbohydrate degradation; pentose phosphate pathway; D-ribose 5-phosphate from D-ribulose 5-phosphate (non-oxidative stage): step 1/1. In terms of biological role, catalyzes the reversible conversion of ribose-5-phosphate to ribulose 5-phosphate. The polypeptide is Ribose-5-phosphate isomerase A (Roseiflexus sp. (strain RS-1)).